The chain runs to 902 residues: Cytosolic 10-formyltetrahydrofolate dehydrogenase (902 aa).

Positions 1-310 (MKIAVIGQSL…LASNFFKGAA (310 aa)) are hydrolase domain. Ser9 carries the post-translational modification Phosphoserine. Lys38 carries the post-translational modification N6-succinyllysine. 88-90 (QFI) provides a ligand contact to (6R)-10-formyltetrahydrofolate. His106 functions as the Proton donor in the catalytic mechanism. Position 142 (Asp142) interacts with (6R)-10-formyltetrahydrofolate. The Carrier domain occupies 318-395 (EAELVTAEAV…DFIQLLVRKL (78 aa)). At Ser354 the chain carries O-(pantetheine 4'-phosphoryl)serine. The tract at residues 417–902 (TVRMPHQLFI…LRVKTVTFEY (486 aa)) is aldehyde dehydrogenase domain. Residues 571 to 573 (IPW) and 597 to 600 (KPAQ) each bind NADP(+). A phosphoserine mark is found at Ser629 and Ser631. NADP(+) contacts are provided by residues 630 to 635 (GSLVGQ) and 650 to 651 (GS). Residue Lys660 is modified to N6-succinyllysine. The active-site Proton acceptor is the Glu673. Position 673-674 (673-674 (EL)) interacts with NADP(+). Catalysis depends on Cys707, which acts as the Proton donor. Lys757 contributes to the NADP(+) binding site. Lys767 is subject to N6-succinyllysine. 804–806 (ESF) contacts NADP(+). A Phosphoserine modification is found at Ser825. Lys882 bears the N6-acetyllysine mark.

The protein in the N-terminal section; belongs to the GART family. In the C-terminal section; belongs to the aldehyde dehydrogenase family. ALDH1L subfamily. Homotetramer. In terms of processing, phosphopantetheinylation at Ser-354 by AASDHPPT is required for the formyltetrahydrofolate dehydrogenase activity. In terms of tissue distribution, highly expressed in liver, pancreas and kidney.

The protein localises to the cytoplasm. It localises to the cytosol. It catalyses the reaction (6R)-10-formyltetrahydrofolate + NADP(+) + H2O = (6S)-5,6,7,8-tetrahydrofolate + CO2 + NADPH + H(+). Functionally, cytosolic 10-formyltetrahydrofolate dehydrogenase that catalyzes the NADP(+)-dependent conversion of 10-formyltetrahydrofolate to tetrahydrofolate and carbon dioxide. May also have an NADP(+)-dependent aldehyde dehydrogenase activity towards formaldehyde, acetaldehyde, propionaldehyde, and benzaldehyde. In Homo sapiens (Human), this protein is Cytosolic 10-formyltetrahydrofolate dehydrogenase.